The primary structure comprises 1374 residues: Protein Dicer (1374 aa).

The 188-residue stretch at 19–206 folds into the Helicase ATP-binding domain; the sequence is VYNIASKQNT…YHRLYQWEQL (188 aa). 32–39 serves as a coordination point for ATP; sequence MRTGAGKT. The DECH box signature appears at 145–148; sequence DECH. The Helicase C-terminal domain maps to 340–517; sequence DVTDKVFKLL…SLVCEERERV (178 aa). The 92-residue stretch at 537-628 folds into the Dicer dsRNA-binding fold domain; it reads AVSLLYNFCN…KPLDFRRKIA (92 aa). RNase III domains are found at residues 916 to 1038 and 1083 to 1233; these read QALT…LDSG and SSYI…LDSG. Mg(2+) is bound by residues Glu-1123, Asp-1219, and Glu-1222. Residues 1263 to 1355 are C-terminal dsRNA-binding fold; that stretch reads EHKVYQLLKD…LLYSCNCKFS (93 aa). Residues Cys-1275, His-1312, Cys-1350, and Cys-1352 each contribute to the Zn(2+) site.

Belongs to the helicase family. Dicer subfamily. Requires Mg(2+) as cofactor. Mn(2+) is required as a cofactor.

It is found in the cytoplasm. It localises to the nucleus. Its function is as follows. Required for G1 arrest and mating in response to nitrogen starvation. Ago1 regulation of cytokinesis and cell cycle checkpoints occurs downstream of dcr1. Required, indirectly, for regulated hyperphosphorylation of cdc2. Has a role in the RNA interference (RNAi) pathway which is important for heterochromatin formation, accurate chromosome segregation, centromere cohesion and telomere function during mitosis and meiosis. Digests double-stranded RNA (dsRNA) producing 21 to 23 bp dsRNAs, so-called interfering RNAs (siRNA). Required for both post-transcriptional and transcriptional gene silencing. Required for silencing at the centromeres and for initiation of transcriptionally silent heterochromatin at the mating type locus. Promotes histone H3 'Lys-10' methylation necessary for centromere function. Required for recruitment of swi6 and cohesin to an ectopic dg repeat. This Schizosaccharomyces pombe (strain 972 / ATCC 24843) (Fission yeast) protein is Protein Dicer (dcr1).